Here is a 450-residue protein sequence, read N- to C-terminus: Benzene 1,2-dioxygenase subunit alpha (450 aa).

A Rieske domain is found at 54 to 163 (WLLLGHETQI…VETYKGLIFA (110 aa)). 4 residues coordinate [2Fe-2S] cluster: C96, H98, C116, and H119. The Fe cation site is built by H222 and H228.

It belongs to the bacterial ring-hydroxylating dioxygenase alpha subunit family. This dioxygenase system consists of four proteins: the two subunits of the hydroxylase component (BnzA and BnzB), a ferredoxin (BnzC) and a ferredoxin reductase (BnzD). It depends on [2Fe-2S] cluster as a cofactor. Fe cation is required as a cofactor.

The catalysed reaction is benzene + NADH + O2 + H(+) = cis-1,2-dihydrobenzene-1,2-diol + NAD(+). It carries out the reaction toluene + NADH + O2 + H(+) = (1S,2R)-3-methylcyclohexa-3,5-diene-1,2-diol + NAD(+). It functions in the pathway aromatic compound metabolism; benzene degradation; catechol from benzene: step 1/2. Its pathway is xenobiotic degradation; toluene degradation. The protein operates within xenobiotic degradation; xylene degradation. In terms of biological role, catalyzes both the oxidation of benzene and toluene. This chain is Benzene 1,2-dioxygenase subunit alpha (bnzA), found in Pseudomonas putida (strain ATCC 700007 / DSM 6899 / JCM 31910 / BCRC 17059 / LMG 24140 / F1).